We begin with the raw amino-acid sequence, 252 residues long: 2-succinyl-6-hydroxy-2,4-cyclohexadiene-1-carboxylate synthase (252 aa).

This sequence belongs to the AB hydrolase superfamily. MenH family. As to quaternary structure, monomer.

It catalyses the reaction 5-enolpyruvoyl-6-hydroxy-2-succinyl-cyclohex-3-ene-1-carboxylate = (1R,6R)-6-hydroxy-2-succinyl-cyclohexa-2,4-diene-1-carboxylate + pyruvate. The protein operates within quinol/quinone metabolism; 1,4-dihydroxy-2-naphthoate biosynthesis; 1,4-dihydroxy-2-naphthoate from chorismate: step 3/7. It functions in the pathway quinol/quinone metabolism; menaquinone biosynthesis. In terms of biological role, catalyzes a proton abstraction reaction that results in 2,5-elimination of pyruvate from 2-succinyl-5-enolpyruvyl-6-hydroxy-3-cyclohexene-1-carboxylate (SEPHCHC) and the formation of 2-succinyl-6-hydroxy-2,4-cyclohexadiene-1-carboxylate (SHCHC). The protein is 2-succinyl-6-hydroxy-2,4-cyclohexadiene-1-carboxylate synthase of Salmonella paratyphi B (strain ATCC BAA-1250 / SPB7).